A 416-amino-acid polypeptide reads, in one-letter code: Phosphoglycerate kinase (416 aa).

(2R)-3-phosphoglycerate is bound by residues valine 23, aspartate 24, phenylalanine 25, asparagine 26, glutamine 38, arginine 39, serine 62, histidine 63, glycine 65, arginine 66, leucine 121, arginine 122, histidine 168, and arginine 169. Glycine 212 is a binding site for ADP. Glycine 212 serves as a coordination point for CDP. Residues alanine 213 and lysine 214 each contribute to the AMP site. Alanine 213 serves as a coordination point for ATP. Alanine 213 contributes to the Mg(2+) binding site. Aspartate 217 lines the CDP pocket. Aspartate 217 is a binding site for Mg(2+). Lysine 218 provides a ligand contact to AMP. Lysine 218 is an ATP binding site. Glycine 236 is an ADP binding site. Glycine 236 is a binding site for CDP. The AMP site is built by glycine 237 and glycine 311. 2 residues coordinate ATP: glycine 237 and glycine 311. Positions 336 and 341 each coordinate CDP. Phenylalanine 341 is a binding site for ADP. Glutamate 342 is a binding site for AMP. Residues glutamate 342, aspartate 373, and threonine 374 each contribute to the ATP site. Aspartate 373 provides a ligand contact to Mg(2+).

It belongs to the phosphoglycerate kinase family. Monomer. The cofactor is Mg(2+).

Its subcellular location is the cytoplasm. It localises to the mitochondrion. The enzyme catalyses (2R)-3-phosphoglycerate + ATP = (2R)-3-phospho-glyceroyl phosphate + ADP. It functions in the pathway carbohydrate degradation; glycolysis; pyruvate from D-glyceraldehyde 3-phosphate: step 2/5. Functionally, catalyzes one of the two ATP producing reactions in the glycolytic pathway via the reversible conversion of 1,3-diphosphoglycerate to 3-phosphoglycerate. Both L- and D- forms of purine and pyrimidine nucleotides can be used as substrates, but the activity is much lower on pyrimidines. Negatively regulates the biosynthesis of acetyl-CoA from pyruvate in the mitochondrion. This chain is Phosphoglycerate kinase (PGK1), found in Debaryomyces hansenii (strain ATCC 36239 / CBS 767 / BCRC 21394 / JCM 1990 / NBRC 0083 / IGC 2968) (Yeast).